A 701-amino-acid chain; its full sequence is Elongation factor G (701 aa).

Positions 8–290 (KHYRNIGISA…AVIEYLPAPI (283 aa)) constitute a tr-type G domain. Residues 17-24 (AHIDAGKT), 88-92 (DTPGH), and 142-145 (NKMD) each bind GTP.

The protein belongs to the TRAFAC class translation factor GTPase superfamily. Classic translation factor GTPase family. EF-G/EF-2 subfamily.

The protein localises to the cytoplasm. Functionally, catalyzes the GTP-dependent ribosomal translocation step during translation elongation. During this step, the ribosome changes from the pre-translocational (PRE) to the post-translocational (POST) state as the newly formed A-site-bound peptidyl-tRNA and P-site-bound deacylated tRNA move to the P and E sites, respectively. Catalyzes the coordinated movement of the two tRNA molecules, the mRNA and conformational changes in the ribosome. This Hamiltonella defensa subsp. Acyrthosiphon pisum (strain 5AT) protein is Elongation factor G.